The sequence spans 2273 residues: MIKSAYAWQCSVDIPYEPTYYPPGPRGRPGAASGTISLSLKAPALSGVRLHPRNGFFEVVRLEHTCWKAAPMNLTLTTTSITIQPSATMANRAPTLLDHFHDQLQKHSSSVAIEDGTQSADQGAWERVTYAQLDALSDSWSKRLRQAGVGAGCIVPLLSKRSVAMVAATLAILKLRAAYVPIDIDSWGKDRIDTVLKTVNPQIIVSTSPCPKDHYPYPVVALERNDFDETVTSNGTQWTRNDEDSIDRGNDLAYIIFTSGTTGIPKGVKIGQRSISRYVKEGGDLPFNFNTTHGTRVLLICSIAFDVCAGVMFNTLCNGGTLVLADPSTFETAAKTCHVLPLTPSILVTLDPKAGFDTVEKIFLGGESPSPSLIEAWSSPRRRLYNAYGPTETTCTAFMGELLPGSPITIGYPISYSTVTLLDEDGMESVEGEICIAGLGLALGYFHDPERTNSAFVEWNGVRIYKTGDYGRRTKHGLQFCGRRDSVVKNRGFLINLEADVEPALLSYDKVDSASAFMSQGQLIAFVTPTSAKEGLREYLANTVSSFLVPDTIYSLDEFPRTSNGKVDRRSLMRMHELEQGSDTASLERGLGAVESVRRGLSHVLRLPESQILPASSFRHLGGHSLAAVMLVSVLRRMGFGISVAEVLLLDTVENIAAAVVELSDIPHALSAQEDLIERLRHDISTTRPLDEGVTIAPMTDMQTRLLGASVATPGLSFIKTSFTLDHPEKEDLTSTLRAAWVRLHQTHEILRTAFVLTASNGAQIISQEPDFSWKEKFVTESEWESVCRREEHLDVADFPDFDAENRASLSRVVLIIAPRRRTRFVWTVHHSLIDGWSMATLMRDFASCLDGKPIPAPPQFAQVAQAIGQLKAESSDRAVSFWKEYLDGYTPAQRLRVSPPSDVSDYTQAALSRKLTVSVSALEDAARDRFAVTPATLLYAAWGLLLSRYSGTDRAALGAVLSGRSLPIPGVENIIGPLINTLPLAINTQEAQSTYSFVQSVFRRLCDILEFQWSPVALIQEGCGCNPSELFETLFALQYDFPQTPWKSSEVPEPRDIRYEEATQVPLTVLLDNANGQFEVRFIYRRSHFGDATVQRMIGQFGNLLENLIAAQPDTDLSNVTGQMFNNRVYEMSIAKPGQPVSACKVPESLTEAIENSIQAHPDIYAVEGLTGRLTYREFGRMTEHISQRLLQHIQPGSVACMISDGSLLWLLAMVAIIRAGAIYCPVDEKLPRDRKDYMVRNSRAALILYANSSQEPLCNGVPSLNMESIMQEISSSSGSPIATSRNRPSGDTVACLVYTSGSTGLPKAVQLQHKGILNVISQPEGRLYSRPGQRNAQMLSLGFDCCIKEVFSTICFGATLVLKDPENPISHLARVDATMATPSLLATLEPTDYPNLKVITVAGEAVSQVLNDKWAAGRTLINGYGPAECTLISTTAILHPGNRVSIGKPLPGLSCYLLDSNKRPVPMGVSGEIYISGVQVTPGYLHNEQETSKRFLSDSFNPGQVMYRTGDIGRMLEDGNIEYIGREDNQIKLRGFRIDLGEVQSTISKLASTASNVALIVSNGNLVAFMTPETIDVRSLAKSLETQLPQYAVPNRIIALATLPTSANNKVDSSALQRYLRDHGKDGAVVEDLETDTQRVLAVIWADMLGRDLNQTPISPSDRFFELGGHSLLQIKVAQAISKRWNIRPLPLKQVIRHHSLQDLSLAIDELVSDPRTVSTMPFLEMTPVARNGQLPLSYLEKEMLLNHLISGGSPAGNMNFVCKIRGDINAETLADAFQRVTADVEVFRTRYSVIEGTLFRQQAPGSVKVPRVVQTGNLSSFVHGRITKSFDLSTEPPVDVSIIIGTPMQAMLVVVMSHVVGDAATMATYLNRVSRTYDLLRSNSQTTNTSTVPDNLTYIDWAHWASTLQPNPRALTFWSSYLSNPPSPLTFGNPSPAPATYIGLTRSWTLPPSMYRKLSDLAAKASVTMHQLILAAVFFSLQCVDRRDDILVAAPFTHRTEPGTESLPGLFLDRLLLRIQRSPHQSSIFDFLSSVRETSQQALAHVIPFHTLRHSLAHKPSLIDPLFKVMVTYHTAADQRPLLDLSGAEVQPIPWRHTGGSKFPLKFEFTEMATQDLEVDMEYDLGCIREDIALRLEFALSFALQLMVLERETDDIIQLVQMSFCPGEGSPVGLTPSHEGSAELTNGTNKTDSTTGQQELENNLTDVVCECLGLEIQDVDADKSFWDLGAQSMDALKLQHLCEKRGVRVRLRDIFVSRSLLELATCAVII.

The segment at 100 to 446 (FHDQLQKHSS…AGLGLALGYF (347 aa)) is adenylation 1. The 77-residue stretch at 588 to 664 (ERGLGAVESV…NIAAAVVELS (77 aa)) folds into the Carrier 1 domain. Residue Ser-625 is modified to O-(pantetheine 4'-phosphoryl)serine. Positions 696 to 1120 (IAPMTDMQTR…AAQPDTDLSN (425 aa)) are condensation 1. The tract at residues 1156–1487 (ENSIQAHPDI…SGVQVTPGYL (332 aa)) is adenylation 2. The 81-residue stretch at 1634–1714 (DLETDTQRVL…DLSLAIDELV (81 aa)) folds into the Carrier 2 domain. Ser-1673 carries the O-(pantetheine 4'-phosphoryl)serine modification. The condensation 2 stretch occupies residues 1735-2127 (GQLPLSYLEK…QDLEVDMEYD (393 aa)). Residues 2174 to 2200 (PVGLTPSHEGSAELTNGTNKTDSTTGQ) are disordered. Over residues 2186-2200 (ELTNGTNKTDSTTGQ) the composition is skewed to polar residues. One can recognise a Carrier 3 domain in the interval 2201-2273 (QELENNLTDV…LELATCAVII (73 aa)). Position 2235 is an O-(pantetheine 4'-phosphoryl)serine (Ser-2235).

It belongs to the NRP synthetase family. The cofactor is pantetheine 4'-phosphate.

Its pathway is secondary metabolite biosynthesis. Its function is as follows. Nonribosomal peptide synthetase; part of the gene cluster that mediates the biosynthesis of hexadehydro-astechrome (HAS), a tryptophan-derived iron(III)-complex that acts as a virulence factor in infected mice. Within the pathway, the NRPS condenses tryptophan and alanine to produce the Trp-Ala dipeptide. The 7-dimethylallyltryptophan synthase hasE then catalyzes the prenylation of the hasD-tethered tryptophan or the resulting tethered Trp-Ala dipeptide at the C-7 position of the indole moiety. HAS biosynthesis continues via tethered intermediates with the succesive actions of the cytochrome P450 monooxygenase hasH, the O-methyltransferase hasC, and the FAD-linked oxidoreductase hasG. The resulting O-methylated diketopiperazine is then released from hasD. Finally, three O-methylated diketopiperazine molecules assemble in a trimeric complex with Fe(III) to produce hexadehydro-astechrome. The chain is Nonribosomal peptide synthetase hasD from Aspergillus fumigatus (strain CBS 144.89 / FGSC A1163 / CEA10) (Neosartorya fumigata).